We begin with the raw amino-acid sequence, 257 residues long: Sulfur carrier protein FdhD (257 aa).

Cysteine 105 acts as the Cysteine persulfide intermediate in catalysis.

Belongs to the FdhD family.

It localises to the cytoplasm. Required for formate dehydrogenase (FDH) activity. Acts as a sulfur carrier protein that transfers sulfur from IscS to the molybdenum cofactor prior to its insertion into FDH. The sequence is that of Sulfur carrier protein FdhD from Saccharolobus solfataricus (strain ATCC 35092 / DSM 1617 / JCM 11322 / P2) (Sulfolobus solfataricus).